The primary structure comprises 121 residues: Large ribosomal subunit protein bL12 (121 aa).

Belongs to the bacterial ribosomal protein bL12 family. Homodimer. Part of the ribosomal stalk of the 50S ribosomal subunit. Forms a multimeric L10(L12)X complex, where L10 forms an elongated spine to which 2 to 4 L12 dimers bind in a sequential fashion. Binds GTP-bound translation factors.

Forms part of the ribosomal stalk which helps the ribosome interact with GTP-bound translation factors. Is thus essential for accurate translation. The polypeptide is Large ribosomal subunit protein bL12 (Tolumonas auensis (strain DSM 9187 / NBRC 110442 / TA 4)).